Here is a 549-residue protein sequence, read N- to C-terminus: Glucose-6-phosphate isomerase (549 aa).

N6-acetyllysine is present on residues Lys80, Lys228, and Lys234. Catalysis depends on Glu355, which acts as the Proton donor. Active-site residues include His386 and Lys514.

This sequence belongs to the GPI family.

It localises to the cytoplasm. The catalysed reaction is alpha-D-glucose 6-phosphate = beta-D-fructose 6-phosphate. The protein operates within carbohydrate biosynthesis; gluconeogenesis. It participates in carbohydrate degradation; glycolysis; D-glyceraldehyde 3-phosphate and glycerone phosphate from D-glucose: step 2/4. Catalyzes the reversible isomerization of glucose-6-phosphate to fructose-6-phosphate. The protein is Glucose-6-phosphate isomerase of Shigella boydii serotype 4 (strain Sb227).